The following is a 199-amino-acid chain: Superoxide dismutase [Mn/Fe] (199 aa).

Fe(3+)-binding residues include His-27, His-81, Asp-161, and His-165. 4 residues coordinate Mn(2+): His-27, His-81, Asp-161, and His-165.

Belongs to the iron/manganese superoxide dismutase family. Homodimer. Mn(2+) is required as a cofactor. It depends on Fe(3+) as a cofactor.

The enzyme catalyses 2 superoxide + 2 H(+) = H2O2 + O2. In terms of biological role, destroys superoxide anion radicals which are normally produced within the cells and which are toxic to biological systems. Catalyzes the dismutation of superoxide anion radicals into O2 and H2O2 by successive reduction and oxidation of the transition metal ion at the active site. The protein is Superoxide dismutase [Mn/Fe] (sodA) of Staphylococcus epidermidis (strain ATCC 35984 / DSM 28319 / BCRC 17069 / CCUG 31568 / BM 3577 / RP62A).